A 423-amino-acid chain; its full sequence is uncharacterized protein (423 aa).

3 residues coordinate Mg(2+): lysine 181, aspartate 183, and glutamate 184. Position 181 is an N6-carboxylysine (lysine 181).

This sequence belongs to the RuBisCO large chain family. Type IV subfamily. The cofactor is Mg(2+).

May be involved in sulfur metabolism and oxidative stress response. Does not show RuBisCO activity. This is an uncharacterized protein from Bordetella bronchiseptica (strain ATCC BAA-588 / NCTC 13252 / RB50) (Alcaligenes bronchisepticus).